The primary structure comprises 1169 residues: Rabankyrin-5 (1169 aa).

Ala2 carries the post-translational modification N-acetylalanine. Residues 68–130 (SDLKIKVGDR…IYTDELEFRE (63 aa)) enclose the BTB domain. 5 ANK repeats span residues 217-247 (KTEYPLHKAIKVEREDVVFLYLIEMDSQLPG), 255-284 (NGDLALDLALSRRLESIATTLVSHKADVDM), 288-317 (SGWSLLHKGIQRGDLFAATFLIKNGAFVNA), 322-362 (AQET…NPNM), and 366-396 (KGRTPLHVSIMAGNEYVFSQLLQCKQLDLEL). Position 270 is a phosphoserine (Ser270). An NPF motif is present at residues 421-423 (NPF). ANK repeat units follow at residues 490 to 519 (WGETPLHTACRHGLANLTAELLQQGANPNL), 542 to 572 (HLQTPLHMAIAYNHPDVVSVILEQKANALHA), 588 to 617 (RDQTVLGLALWTGMHTIAAQLLGSGAAIND), 621 to 650 (DGQTLLHMAIQRQDSKSALFLLEHQADINV), 654 to 683 (DGETALQLAIRNQLPLVVDAICTRGADMSV), 687 to 716 (KGNPPLWLALANNLEDIASTLVRHGCDATC), 724 to 753 (CLQTLLHRAIDENNEPTACFLIRSGCDVNS), 769 to 798 (DGQTPLHLAASWGLEETVQCLLEFGANVNA), 802 to 832 (EGRTPIHVAISSQHGVIIQLLVSHPDIHLNV), 836 to 865 (QGLTPFACAMTFKNNKSAEAILKRESGAAE), 870 to 899 (KGRNFLHVAVQNSDIESVLFLISVHANVNS), 905 to 934 (SKLTPLHLAVQAGSEIIVRNLLLAGAKVNE), 938 to 967 (HRQTALHLAAQQDLPTICSVLLENGVDFAA), 971 to 1001 (NGNNALHLAVMHGRLNNIRVLLTECTVDAEA), 1005 to 1037 (RGQSPLHILGQYGKENAAAIFDLFLECMPGYPL), and 1043 to 1072 (DGSTVLLLAYMKGNANLCRAIVRSGARLGV). Residues 650 to 759 (VRTQDGETAL…DVNSPRQPGA (110 aa)) form an interaction with RHOD and RAB5A region. The FYVE-type zinc finger occupies 1104-1164 (WCDGSYCYEC…VCNICFDVLT (61 aa)). Zn(2+) contacts are provided by Cys1110, Cys1113, Cys1126, Cys1129, Cys1134, Cys1137, Cys1156, and Cys1159.

In terms of assembly, interacts with RAB5A (in GTP-bound form). Interacts with RHOD (independent of GTP-loaded status). Interacts with EHD1. Interacts with VPS26A; the interaction is independent of EHD1 and is indicative for an association with the cargo recognition subcomplex of the retromer complex. As to expression, high expression in whole adult brain and intermediate expression in all other tissues and specific brain regions examined, including fetal brain.

Its subcellular location is the cytoplasm. The protein localises to the endosome membrane. The protein resides in the early endosome. Functionally, proposed effector of Rab5. Binds to phosphatidylinositol 3-phosphate (PI(3)P). Involved in homotypic early endosome fusion and to a lesser extent in heterotypic fusion of chlathrin-coated vesicles with early endosomes. Involved in macropinocytosis; the function is dependent on Rab5-GTP. Required for correct endosomal localization. Involved in the internalization and trafficking of activated tyrosine kinase receptors such as PDGFRB. Regulates the subcellular localization of the retromer complex in a EHD1-dependent manner. Involved in endosome-to-Golgi transport and biosynthetic transport to late endosomes and lysosomes indicative for a regulation of retromer complex-mediated retrograde transport. The chain is Rabankyrin-5 (ANKFY1) from Homo sapiens (Human).